Consider the following 179-residue polypeptide: ATP-dependent protease subunit HslV (179 aa).

The active site involves T5. Na(+) contacts are provided by C164 and T167.

Belongs to the peptidase T1B family. HslV subfamily. A double ring-shaped homohexamer of HslV is capped on each side by a ring-shaped HslU homohexamer. The assembly of the HslU/HslV complex is dependent on binding of ATP.

It localises to the cytoplasm. It catalyses the reaction ATP-dependent cleavage of peptide bonds with broad specificity.. Allosterically activated by HslU binding. Functionally, protease subunit of a proteasome-like degradation complex believed to be a general protein degrading machinery. The protein is ATP-dependent protease subunit HslV of Carboxydothermus hydrogenoformans (strain ATCC BAA-161 / DSM 6008 / Z-2901).